The primary structure comprises 137 residues: Large ribosomal subunit protein uL16 (137 aa).

It belongs to the universal ribosomal protein uL16 family. In terms of assembly, part of the 50S ribosomal subunit.

Functionally, binds 23S rRNA and is also seen to make contacts with the A and possibly P site tRNAs. The polypeptide is Large ribosomal subunit protein uL16 (Aromatoleum aromaticum (strain DSM 19018 / LMG 30748 / EbN1) (Azoarcus sp. (strain EbN1))).